The primary structure comprises 1187 residues: BAI1-associated protein 3 (1187 aa).

A disordered region spans residues 55 to 81 (SFRRRTEQDPGSASADPQEPATGAWKP). The C2 1 domain maps to 176-335 (SLEEHTEAIE…VKSARANGTA (160 aa)). Ca(2+) is bound by residues Asp211, Asp217, Asp295, and Asp297. In terms of domain architecture, MHD1 spans 663–784 (FELYLTLADL…EATLFYTELL (122 aa)). Residues 888-996 (DEAVAPLMKY…CSTRECIEQF (109 aa)) form the MHD2 domain. The region spanning 1010–1136 (RFGRLSVRCH…GVARPQVGGG (127 aa)) is the C2 2 domain. Residues Leu1040, Asp1041, Asp1047, Asp1105, Asp1107, Ser1110, and Asp1113 each contribute to the Ca(2+) site.

It belongs to the unc-13 family. As to quaternary structure, interacts with ADGRB1; this interaction is direct. Interacts with endosomal SNARE proteins VAMP3, VAMP4, STX6 and STX16; this interaction is increased in the presence of calcium. It depends on Ca(2+) as a cofactor. In terms of tissue distribution, predominantly expressed in brain. Also expressed in nonneural tissues such as breast and testes epithelium.

The protein resides in the cytoplasm. The protein localises to the cytosol. It is found in the recycling endosome membrane. It localises to the late endosome membrane. Its subcellular location is the golgi apparatus. The protein resides in the trans-Golgi network membrane. The protein localises to the cell membrane. Functions in endosome to Golgi retrograde transport. In response to calcium influx, may interact with SNARE fusion receptors and membrane phospholipids to mediate endosome fusion with the trans-Golgi network. By promoting the recycling of secretory vesicle transmembrane proteins, it indirectly controls dense-core secretory vesicle biogenesis, maturation and their ability to mediate the constitutive and regulated secretion of neurotransmitters and hormones. May regulate behavior and food intake by controlling calcium-stimulated exocytosis of neurotransmitters including NPY and serotonin and hormones like insulin. Proposed to play a role in hypothalamic neuronal firing by modulating gamma-aminobutyric acid (GABA)ergic inhibitory neurotransmission. In Homo sapiens (Human), this protein is BAI1-associated protein 3.